Reading from the N-terminus, the 201-residue chain is 3-isopropylmalate dehydratase small subunit (201 aa).

It belongs to the LeuD family. LeuD type 1 subfamily. Heterodimer of LeuC and LeuD.

It catalyses the reaction (2R,3S)-3-isopropylmalate = (2S)-2-isopropylmalate. Its pathway is amino-acid biosynthesis; L-leucine biosynthesis; L-leucine from 3-methyl-2-oxobutanoate: step 2/4. In terms of biological role, catalyzes the isomerization between 2-isopropylmalate and 3-isopropylmalate, via the formation of 2-isopropylmaleate. This Shewanella baltica (strain OS223) protein is 3-isopropylmalate dehydratase small subunit.